Consider the following 631-residue polypeptide: ATP-dependent RNA helicase mrh4, mitochondrial (631 aa).

The transit peptide at 1-45 (MNRLGRLPLPLPPSVCLFCQSRATTPLPPSLQATRSMATARLRRR) directs the protein to the mitochondrion. Residues 68-111 (KERFGPFAGMNQTEARIRDKPRTRSRAAQKRSGEPEEDSQKESP) are disordered. The segment covering 98-108 (RSGEPEEDSQK) has biased composition (basic and acidic residues). Positions 141–174 (TSFDQFQLLPVVRNSISSQALPGLVDVTPTPIQR) match the Q motif motif. Residues 180 to 193 (LLEEPKTEKKPTKA) are compositionally biased toward basic and acidic residues. The segment at 180–199 (LLEEPKTEKKPTKADDDEPQ) is disordered. Residues 194–406 (DDDEPQYDQY…RKRYPDIKRL (213 aa)) enclose the Helicase ATP-binding domain. 207–214 (AETGSGKT) is a binding site for ATP. A disordered region spans residues 229–249 (EARDKELEKKEQEEKAREREE). Residues 353–356 (DEAD) carry the DEAD box motif. The Helicase C-terminal domain occupies 455–631 (GPYASYVAPK…EGMFRGQALI (177 aa)).

The protein belongs to the DEAD box helicase family. MRH4 subfamily.

Its subcellular location is the mitochondrion. The catalysed reaction is ATP + H2O = ADP + phosphate + H(+). Its function is as follows. ATP-binding RNA helicase involved in mitochondrial RNA metabolism. Required for maintenance of mitochondrial DNA. The protein is ATP-dependent RNA helicase mrh4, mitochondrial (mrh4) of Neosartorya fischeri (strain ATCC 1020 / DSM 3700 / CBS 544.65 / FGSC A1164 / JCM 1740 / NRRL 181 / WB 181) (Aspergillus fischerianus).